The sequence spans 169 residues: MVRFKSRYLLCELCVSEPSSLHLFEDKVVYQALRGAVNRAHGDYGAAIFNITLGVLVKYLNAHTGVVLIRCRKAHYRLVWSSLPFITFLENRGQKVRCFFNCIHVGGTIRTSQKFLIKYNRQQLQRMLLDCKTDAEKQDVRKAILSCSLNLIKGEETDGSDDDGDEEDT.

Belongs to the eukaryotic/archaeal RNase P protein component 2 family. In terms of assembly, component of nuclear RNase P and RNase MRP ribonucleoproteins. RNase P consists of a catalytic RNA moiety and 10 different protein chains; POP1, POP4, POP5, POP7, RPP14, RPP21, RPP25, RPP30, RPP38 and RPP40. Within the RNase P complex, POP1, POP7 and RPP25 form the 'finger' subcomplex, POP5, RPP14, RPP40 and homodimeric RPP30 form the 'palm' subcomplex, and RPP21, POP4 and RPP38 form the 'wrist' subcomplex. All subunits of the RNase P complex interact with the catalytic RNA. Several subunits of RNase P are also part of the RNase MRP complex. RNase MRP consists of a catalytic RNA moiety and about 8 protein subunits; POP1, POP7, RPP25, RPP30, RPP38, RPP40 and possibly also POP4 and POP5.

The protein resides in the nucleus. The protein localises to the nucleolus. Its function is as follows. Component of ribonuclease P, a protein complex that generates mature tRNA molecules by cleaving their 5'-ends. Also a component of the MRP ribonuclease complex, which cleaves pre-rRNA sequences. The sequence is that of Ribonuclease P/MRP protein subunit POP5 (pop5) from Danio rerio (Zebrafish).